We begin with the raw amino-acid sequence, 184 residues long: MSENNTNNGLDEDFDDDDELAKIREQRMKQLKEESKLKQSFLSTHGELKEIDEQDFLKEVTGTDNVVVHFYHSDFQRCKILDKSLEILAKTHLGTKFLKVNAEKAQFFTGKLGIRILPTLVFFSNGIAVDRCVGFEEFGGIDSFKIEQLAIRISKAGVLDFKHTTGLKIISKQDVKNNKFKEDD.

The thioredoxin fold stretch occupies residues 45–184 (HGELKEIDEQ…VKNNKFKEDD (140 aa)).

It belongs to the phosducin family.

This is Phosducin-like protein 3 (phlp3) from Dictyostelium discoideum (Social amoeba).